Consider the following 915-residue polypeptide: Clathrin coat assembly protein AP180 (915 aa).

Residues 14 to 145 (QYSVTGSAVA…FSYRQMAFDF (132 aa)) form the ENTH domain. Disordered stretches follow at residues 285-326 (LEGK…DTSP), 391-425 (SVPS…ATTA), and 497-522 (PETS…PSPA). S296, S300, and S306 each carry phosphoserine. A compositionally biased stretch (polar residues) spans 302–324 (LSKSSPATTVTSPNSTPAKTIDT). O-linked (GlcNAc) threonine glycosylation is present at T310. S313 carries the post-translational modification Phosphoserine. T317 is modified (phosphothreonine). Composition is skewed to low complexity over residues 410–425 (TTTT…ATTA) and 500–511 (SAPVVTPTASTA). Over residues 512 to 522 (PPVPATAPSPA) the composition is skewed to pro residues. 5 positions are modified to phosphoserine: S594, S600, P627, S640, and S646. A compositionally biased stretch (low complexity) spans 720–735 (TTPSTSSSSSFDPSGD). Residues 720–765 (TTPSTSSSSSFDPSGDLLMPTMAPSGQPAPVSMVPPSPAMSASKGL) are disordered. S775 carries the phosphoserine modification. A disordered region spans residues 817-855 (SAGVPPQGTVPPTSSVPPGAGAPSVGQPGAGYGMPPAGT). An Asymmetric dimethylarginine; alternate modification is found at R873. R873 carries the omega-N-methylarginine; alternate modification. The interval 875–915 (PFGAAAVPGTQLSPSPTPATQSPKKPPAKDPLADLNIKDFL) is disordered. A compositionally biased stretch (polar residues) spans 884-896 (TQLSPSPTPATQS). Over residues 901–915 (PAKDPLADLNIKDFL) the composition is skewed to basic and acidic residues.

It belongs to the PICALM/SNAP91 family. As to quaternary structure, binds AP2A2. Interacts with AP2B1; clathrin competes with SNAP91. In terms of processing, thr-310 can be modified by the addition of N-acetylglucosamine which can be further phosphorylated. The form with phosphorylated O-linked N-acetylglucosamine is predominant in brain synaptosomes. There is no evidence for direct Thr-310 phosphorylation.

It is found in the cell membrane. It localises to the membrane. Its subcellular location is the coated pit. In terms of biological role, adaptins are components of the adapter complexes which link clathrin to receptors in coated vesicles. Clathrin-associated protein complexes are believed to interact with the cytoplasmic tails of membrane proteins, leading to their selection and concentration. Binding of AP180 to clathrin triskelia induces their assembly into 60-70 nm coats. This chain is Clathrin coat assembly protein AP180 (Snap91), found in Rattus norvegicus (Rat).